A 242-amino-acid chain; its full sequence is Potassium/proton antiporter CemA (242 aa).

The next 2 helical transmembrane spans lie at 116-136 (IIFC…YSIL) and 200-220 (ISGF…YLIF).

It belongs to the CemA family.

It is found in the plastid. The protein resides in the chloroplast inner membrane. The enzyme catalyses K(+)(in) + H(+)(out) = K(+)(out) + H(+)(in). Functionally, contributes to K(+)/H(+) antiport activity by supporting proton efflux to control proton extrusion and homeostasis in chloroplasts in a light-dependent manner to modulate photosynthesis. Prevents excessive induction of non-photochemical quenching (NPQ) under continuous-light conditions. Indirectly promotes efficient inorganic carbon uptake into chloroplasts. The chain is Potassium/proton antiporter CemA from Chloranthus spicatus (Chulantree).